The chain runs to 590 residues: L-asparaginase (590 aa).

Residues 6 to 357 form the Asparaginase/glutaminase domain; sequence AHVLVLYTGG…VEKKAMMVKN (352 aa). T16 acts as the O-isoaspartyl threonine intermediate in catalysis. The asparaginase stretch occupies residues 44-351; sequence NDDDYVSTYY…KDCWELVEKK (308 aa). Substrate is bound by residues 85–87 and 117–118; these read DSS and TD. 4 ANK repeats span residues 398–427, 431–460, 497–526, and 530–559; these read IFPQ…DLSV, NGRN…SFHL, RLGV…DINQ, and NGET…DPYK.

The protein in the N-terminal section; belongs to the asparaginase 1 family. In terms of tissue distribution, may be present in the larval cuticle.

It carries out the reaction L-asparagine + H2O = L-aspartate + NH4(+). This is L-asparaginase from Dirofilaria immitis (Canine heartworm).